Here is a 130-residue protein sequence, read N- to C-terminus: Small ribosomal subunit protein bS16 (130 aa).

The tract at residues 82-130 (VLPKTERNNPKKAVPGKKAQDRAEEKAAKAAEASEAPADEAPAEEAAAE) is disordered. Basic and acidic residues predominate over residues 99-110 (KAQDRAEEKAAK). Residues 118–130 (PADEAPAEEAAAE) show a composition bias toward acidic residues.

Belongs to the bacterial ribosomal protein bS16 family.

This is Small ribosomal subunit protein bS16 from Dinoroseobacter shibae (strain DSM 16493 / NCIMB 14021 / DFL 12).